The sequence spans 650 residues: Putative F-box protein R757 (650 aa).

The 47-residue stretch at phenylalanine 7–isoleucine 53 folds into the F-box domain.

The sequence is that of Putative F-box protein R757 from Acanthamoeba polyphaga mimivirus (APMV).